A 485-amino-acid polypeptide reads, in one-letter code: UDP-N-acetylmuramate--L-alanine ligase (485 aa).

120–126 (GSHGKTT) contacts ATP.

This sequence belongs to the MurCDEF family.

The protein localises to the cytoplasm. It carries out the reaction UDP-N-acetyl-alpha-D-muramate + L-alanine + ATP = UDP-N-acetyl-alpha-D-muramoyl-L-alanine + ADP + phosphate + H(+). The protein operates within cell wall biogenesis; peptidoglycan biosynthesis. In terms of biological role, cell wall formation. This Rickettsia rickettsii (strain Iowa) protein is UDP-N-acetylmuramate--L-alanine ligase.